We begin with the raw amino-acid sequence, 558 residues long: Dihydroxy-acid dehydratase (558 aa).

Position 50 (cysteine 50) interacts with [2Fe-2S] cluster. Aspartate 82 contributes to the Mg(2+) binding site. Cysteine 123 is a binding site for [2Fe-2S] cluster. Residues aspartate 124 and lysine 125 each coordinate Mg(2+). At lysine 125 the chain carries N6-carboxylysine. Cysteine 195 is a [2Fe-2S] cluster binding site. Glutamate 447 serves as a coordination point for Mg(2+). The active-site Proton acceptor is the serine 472.

Belongs to the IlvD/Edd family. Homodimer. The cofactor is [2Fe-2S] cluster. Requires Mg(2+) as cofactor.

The enzyme catalyses (2R)-2,3-dihydroxy-3-methylbutanoate = 3-methyl-2-oxobutanoate + H2O. It catalyses the reaction (2R,3R)-2,3-dihydroxy-3-methylpentanoate = (S)-3-methyl-2-oxopentanoate + H2O. It participates in amino-acid biosynthesis; L-isoleucine biosynthesis; L-isoleucine from 2-oxobutanoate: step 3/4. The protein operates within amino-acid biosynthesis; L-valine biosynthesis; L-valine from pyruvate: step 3/4. Its function is as follows. Functions in the biosynthesis of branched-chain amino acids. Catalyzes the dehydration of (2R,3R)-2,3-dihydroxy-3-methylpentanoate (2,3-dihydroxy-3-methylvalerate) into 2-oxo-3-methylpentanoate (2-oxo-3-methylvalerate) and of (2R)-2,3-dihydroxy-3-methylbutanoate (2,3-dihydroxyisovalerate) into 2-oxo-3-methylbutanoate (2-oxoisovalerate), the penultimate precursor to L-isoleucine and L-valine, respectively. In Saccharolobus islandicus (strain M.16.27) (Sulfolobus islandicus), this protein is Dihydroxy-acid dehydratase.